Consider the following 1020-residue polypeptide: Calcium-transporting ATPase 10, plasma membrane-type (1020 aa).

Topologically, residues 1 to 175 (MESYLEENFG…FVWEALQDTT (175 aa)) are cytoplasmic. The interaction with calmodulin stretch occupies residues 21 to 32 (ALRRWRKLCGVV). 2 helical membrane-spanning segments follow: residues 176-196 (LIIL…MEGW) and 199-219 (GAHD…VTAT). At 220-263 (SDYRQSLQFKDLDKEKKKIQVQVTRNGFRQRLSIYDLLPGDVVH) the chain is on the cytoplasmic side. 2 consecutive transmembrane segments (helical) span residues 264–284 (LAIG…SLLI) and 352–372 (GVAT…FIVL). Residues 373-400 (SQGLISKKYHEGLLLSWSGDDALEMLEH) lie on the Cytoplasmic side of the membrane. The helical transmembrane segment at 401–421 (FAIAVTIVVVAVPEGLPLAVT) threads the bilayer. Asp456 (4-aspartylphosphate intermediate) is an active-site residue. Mg(2+) contacts are provided by Asp758 and Asp762. Residues 843–863 (LTAVQLLWVNMIMDTLGALAL) form a helical membrane-spanning segment. At 864 to 887 (ATEPPNDDLMKREPVGRTGKFITN) the chain is on the cytoplasmic side. A run of 2 helical transmembrane segments spans residues 888–907 (VMWR…MWYL) and 924–944 (VVLN…NEIS). Residues 945–961 (SREMEKINVLRGILKNY) are Cytoplasmic-facing. 2 helical membrane passes run 962–982 (VFLG…QFLG) and 995–1015 (WIAS…IKLL). At 1016 to 1020 (PVGSS) the chain is on the cytoplasmic side.

It belongs to the cation transport ATPase (P-type) (TC 3.A.3) family. Type IIB subfamily.

The protein localises to the membrane. It catalyses the reaction Ca(2+)(in) + ATP + H2O = Ca(2+)(out) + ADP + phosphate + H(+). Its activity is regulated as follows. Activated by calmodulin. This magnesium-dependent enzyme catalyzes the hydrolysis of ATP coupled with the translocation of calcium from the cytosol out of the cell, into the endoplasmic reticulum, or into organelles. The protein is Calcium-transporting ATPase 10, plasma membrane-type of Oryza sativa subsp. japonica (Rice).